A 123-amino-acid polypeptide reads, in one-letter code: Snaclec GPIB-binding protein subunit beta (123 aa).

Disulfide bonds link Cys-2/Cys-13, Cys-30/Cys-119, and Cys-96/Cys-111. A C-type lectin domain is found at 9–120 (YGGHCYKLFK…CTRLQYFVCE (112 aa)).

Belongs to the snaclec family. Heterodimer of subunits alpha and beta; disulfide-linked. In terms of tissue distribution, expressed by the venom gland.

It localises to the secreted. In terms of biological role, binds to platelet GPIb (subunit alpha) (GP1BA) and functions as a receptor blocker for vWF binding to GPIb. The platelet GPIb-binding site resides on the GPIB-BP subunit beta and not on the alpha subunit. At a final concentration of 104 nM totally abolishes vWF-dependent shear-induced platelet aggregation (SIPA) at a high shear stress, but had no effect on SIPA at a low shear stress. This is Snaclec GPIB-binding protein subunit beta from Bothrops jararaca (Jararaca).